The sequence spans 137 residues: Prefoldin subunit alpha (137 aa).

The protein belongs to the prefoldin subunit alpha family. Heterohexamer of two alpha and four beta subunits.

The protein resides in the cytoplasm. Functionally, molecular chaperone capable of stabilizing a range of proteins. Seems to fulfill an ATP-independent, HSP70-like function in archaeal de novo protein folding. The sequence is that of Prefoldin subunit alpha (pfdA) from Archaeoglobus fulgidus (strain ATCC 49558 / DSM 4304 / JCM 9628 / NBRC 100126 / VC-16).